The primary structure comprises 163 residues: UPF0262 protein RPB_4349 (163 aa).

The protein belongs to the UPF0262 family.

The protein is UPF0262 protein RPB_4349 of Rhodopseudomonas palustris (strain HaA2).